A 785-amino-acid polypeptide reads, in one-letter code: Probably inactive leucine-rich repeat receptor-like protein kinase At5g58150 (785 aa).

Positions 1-21 (MRLSLWGSLLFFSFFVKHLTS) are cleaved as a signal peptide. The Extracellular portion of the chain corresponds to 22–436 (LDPNTDAYHL…KVNKKNTGLK (415 aa)). 14 LRR repeats span residues 64-88 (SENV…TIGK), 89-112 (MSKL…LWSL), 114-136 (LLES…IGNF), 138-160 (SLHT…ISNL), 161-184 (VNLT…LVHC), 186-208 (SLLS…FGSA), 210-232 (PLLK…VLHE), 236-258 (TVDL…HKHN), 259-283 (WSSL…LSSA), 284-306 (HKLG…EIGK), 307-330 (LSAL…EISR), 331-355 (LSHL…SVKN), 357-377 (EVLD…LLEK), and 379-405 (AMMQ…TIQR). Asn119 carries an N-linked (GlcNAc...) asparagine glycan. N-linked (GlcNAc...) asparagine glycans are attached at residues Asn162, Asn198, Asn216, and Asn258. N-linked (GlcNAc...) asparagine glycosylation is found at Asn314, Asn319, and Asn343. 3 N-linked (GlcNAc...) asparagine glycosylation sites follow: Asn385, Asn390, and Asn397. The helical transmembrane segment at 437-457 (IGLGLAISMAFLLIGLLLILV) threads the bilayer. Residues 458 to 785 (ALRVRRKSRT…GLLKDISPNY (328 aa)) are Cytoplasmic-facing. A phosphothreonine mark is found at Thr510 and Thr518. Residues 521–785 (FDRGTMLWEG…GLLKDISPNY (265 aa)) enclose the Protein kinase domain. ATP-binding positions include 527 to 535 (LWEGKSGPT) and Lys549. Tyr594 and Tyr683 each carry phosphotyrosine.

This sequence belongs to the protein kinase superfamily. Ser/Thr protein kinase family.

It is found in the cell membrane. This Arabidopsis thaliana (Mouse-ear cress) protein is Probably inactive leucine-rich repeat receptor-like protein kinase At5g58150.